A 450-amino-acid chain; its full sequence is Cysteine proteinase (450 aa).

The N-terminal stretch at 1–20 (MPRTEMVRFVRLPVVLLAMA) is a signal peptide. Positions 21–125 (ACLASVALGS…RKTVNVTTGR (105 aa)) are cleaved as a propeptide — activation peptide. Asparagine 120 is a glycosylation site (N-linked (GlcNAc...) asparagine). Cysteine 147 and cysteine 188 are joined by a disulfide. Catalysis depends on residues cysteine 150, histidine 287, and asparagine 307. Residues 343–450 (TPPPPPPPPP…TKAARLVPHQ (108 aa)) are 108-residue extension. N-linked (GlcNAc...) asparagine glycosylation occurs at asparagine 397.

This sequence belongs to the peptidase C1 family.

The protein resides in the lysosome. In terms of biological role, the cysteine proteinases have a potential role in host-parasite interaction and virulence. This chain is Cysteine proteinase, found in Trypanosoma brucei brucei.